The following is a 270-amino-acid chain: Glucosamine-6-phosphate deaminase (270 aa).

Asp68 functions as the Proton acceptor; for enolization step in the catalytic mechanism. The For ring-opening step role is filled by Asp145. His147 acts as the Proton acceptor; for ring-opening step in catalysis. Catalysis depends on Glu152, which acts as the For ring-opening step.

Belongs to the glucosamine/galactosamine-6-phosphate isomerase family. NagB subfamily.

It carries out the reaction alpha-D-glucosamine 6-phosphate + H2O = beta-D-fructose 6-phosphate + NH4(+). Its pathway is amino-sugar metabolism; N-acetylneuraminate degradation; D-fructose 6-phosphate from N-acetylneuraminate: step 5/5. Functionally, catalyzes the reversible isomerization-deamination of glucosamine 6-phosphate (GlcN6P) to form fructose 6-phosphate (Fru6P) and ammonium ion. This Bifidobacterium longum (strain DJO10A) protein is Glucosamine-6-phosphate deaminase.